We begin with the raw amino-acid sequence, 246 residues long: 1-(5-phosphoribosyl)-5-[(5-phosphoribosylamino)methylideneamino] imidazole-4-carboxamide isomerase (246 aa).

The active-site Proton acceptor is the Asp12. Residue Asp134 is the Proton donor of the active site.

This sequence belongs to the HisA/HisF family.

The protein localises to the cytoplasm. It carries out the reaction 1-(5-phospho-beta-D-ribosyl)-5-[(5-phospho-beta-D-ribosylamino)methylideneamino]imidazole-4-carboxamide = 5-[(5-phospho-1-deoxy-D-ribulos-1-ylimino)methylamino]-1-(5-phospho-beta-D-ribosyl)imidazole-4-carboxamide. It participates in amino-acid biosynthesis; L-histidine biosynthesis; L-histidine from 5-phospho-alpha-D-ribose 1-diphosphate: step 4/9. The chain is 1-(5-phosphoribosyl)-5-[(5-phosphoribosylamino)methylideneamino] imidazole-4-carboxamide isomerase from Psychrobacter cryohalolentis (strain ATCC BAA-1226 / DSM 17306 / VKM B-2378 / K5).